The primary structure comprises 409 residues: Translation initiation factor 2 subunit gamma (409 aa).

The 197-residue stretch at glutamine 7 to aspartate 203 folds into the tr-type G domain. The G1 stretch occupies residues glycine 16–threonine 23. Mg(2+)-binding residues include aspartate 19, threonine 23, glycine 44, and serine 46. Position 19 to 24 (aspartate 19 to threonine 24) interacts with GTP. The interval glycine 44–arginine 48 is G2. The tract at residues aspartate 90 to glycine 93 is G3. GTP-binding positions include asparagine 146 to aspartate 149 and serine 181 to glutamine 183. Residues asparagine 146 to aspartate 149 are G4. Positions serine 181–glutamine 183 are G5.

Belongs to the TRAFAC class translation factor GTPase superfamily. Classic translation factor GTPase family. EIF2G subfamily. As to quaternary structure, heterotrimer composed of an alpha, a beta and a gamma chain. It depends on Mg(2+) as a cofactor.

It carries out the reaction GTP + H2O = GDP + phosphate + H(+). EIF-2 functions in the early steps of protein synthesis by forming a ternary complex with GTP and initiator tRNA. This chain is Translation initiation factor 2 subunit gamma, found in Natronomonas pharaonis (strain ATCC 35678 / DSM 2160 / CIP 103997 / JCM 8858 / NBRC 14720 / NCIMB 2260 / Gabara) (Halobacterium pharaonis).